We begin with the raw amino-acid sequence, 395 residues long: Cyclin-A2 (395 aa).

The interval 1–93 is disordered; that stretch reads MLAEQENQEN…EEAADAPGLR (93 aa). Positions 27–60 are enriched in low complexity; sequence ALGLLRGGPARPGPAAQAARNGEGRGAAAGQQQQ.

The protein belongs to the cyclin family. Cyclin AB subfamily. As to quaternary structure, interacts with the CDK1 and CDK2 protein kinases to form serine/threonine kinase holoenzyme complexes.

The protein localises to the nucleus. The protein resides in the cytoplasm. Its function is as follows. Cyclin which controls both the G1/S and the G2/M transition phases of the cell cycle. Functions through the formation of specific serine/threonine kinase holoenzyme complexes with the cyclin-dependent protein kinases CDK1 and CDK2. The cyclin subunit confers the substrate specificity of these complexes and differentially interacts with and activates CDK1 and CDK2 throughout the cell cycle. This chain is Cyclin-A2, found in Gallus gallus (Chicken).